A 385-amino-acid polypeptide reads, in one-letter code: uncharacterized protein (385 aa).

Lys-194 is subject to N6-(pyridoxal phosphate)lysine.

The protein belongs to the class-V pyridoxal-phosphate-dependent aminotransferase family. The cofactor is pyridoxal 5'-phosphate.

This is an uncharacterized protein from Methanocaldococcus jannaschii (strain ATCC 43067 / DSM 2661 / JAL-1 / JCM 10045 / NBRC 100440) (Methanococcus jannaschii).